The following is a 116-amino-acid chain: Fluoride-specific ion channel FluC 1 (116 aa).

The next 4 helical transmembrane spans lie at 1–21, 32–52, 54–74, and 93–113; these read MYAP…RYLV, FPLG…WLAG, GAAD…FTTF, and VVVY…LGYH. Residues Gly-69 and Thr-72 each coordinate Na(+).

The protein belongs to the fluoride channel Fluc/FEX (TC 1.A.43) family.

The protein resides in the cell membrane. It catalyses the reaction fluoride(in) = fluoride(out). With respect to regulation, na(+) is not transported, but it plays an essential structural role and its presence is essential for fluoride channel function. In terms of biological role, fluoride-specific ion channel. Important for reducing fluoride concentration in the cell, thus reducing its toxicity. The polypeptide is Fluoride-specific ion channel FluC 1 (Geobacillus kaustophilus (strain HTA426)).